The following is a 294-amino-acid chain: Cytidine deaminase (294 aa).

CMP/dCMP-type deaminase domains follow at residues 48-168 and 186-294; these read DEDA…FGPK and LTGD…VLLG. 89 to 91 lines the substrate pocket; the sequence is NME. His-102 provides a ligand contact to Zn(2+). Glu-104 (proton donor) is an active-site residue. Zn(2+) is bound by residues Cys-129 and Cys-132.

Belongs to the cytidine and deoxycytidylate deaminase family. Homodimer. Zn(2+) serves as cofactor.

The enzyme catalyses cytidine + H2O + H(+) = uridine + NH4(+). The catalysed reaction is 2'-deoxycytidine + H2O + H(+) = 2'-deoxyuridine + NH4(+). This enzyme scavenges exogenous and endogenous cytidine and 2'-deoxycytidine for UMP synthesis. The protein is Cytidine deaminase of Salmonella choleraesuis (strain SC-B67).